Here is a 414-residue protein sequence, read N- to C-terminus: Protein HIM1 (414 aa).

In terms of biological role, may participate in the control of processing of mutational intermediates appearing during error-prone bypass of DNA damage. This Saccharomyces cerevisiae (strain ATCC 204508 / S288c) (Baker's yeast) protein is Protein HIM1 (HIM1).